Consider the following 111-residue polypeptide: Secreted RxLR effector protein 159 (111 aa).

The first 21 residues, 1–21, serve as a signal peptide directing secretion; sequence MRGAYYVAIAFLVAASSRTAA. The short motif at 50-71 is the RxLR-dEER element; the sequence is RVLRGSRDLKDKLAVYANDEQR. Asn81 is a glycosylation site (N-linked (GlcNAc...) asparagine).

Belongs to the RxLR effector family.

It localises to the secreted. The protein resides in the host nucleus. It is found in the host cytoplasm. Secreted effector that completely suppresses the host cell death induced by cell death-inducing proteins. The sequence is that of Secreted RxLR effector protein 159 from Plasmopara viticola (Downy mildew of grapevine).